Reading from the N-terminus, the 699-residue chain is Homeobox-leucine zipper protein HDG8 (699 aa).

Residues 1 to 31 (MDNNGGGSSGNEQYTSGDAKQNGKRTCHRHT) are disordered. The span at 10–19 (GNEQYTSGDA) shows a compositional bias: polar residues. Basic residues predominate over residues 22–31 (NGKRTCHRHT). The segment at residues 23–82 (GKRTCHRHTPQQIQRLEAYFKECPHPDERQRNQLCRELKLEPDQIKFWFQNKRTQSKTQE) is a DNA-binding region (homeobox). Residues 89–149 (LLRGENETLQ…LKDHRDRISN (61 aa)) adopt a coiled-coil conformation. An START domain is found at 204–438 (AETDMSLLSE…LERMCERMAL (235 aa)).

This sequence belongs to the HD-ZIP homeobox family. Class IV subfamily. In terms of assembly, interacts with ANT. As to expression, expressed in the embryo at early stage and in the endosperm.

The protein localises to the nucleus. In terms of biological role, probable transcription factor. This chain is Homeobox-leucine zipper protein HDG8, found in Arabidopsis thaliana (Mouse-ear cress).